Reading from the N-terminus, the 213-residue chain is Uracil phosphoribosyltransferase (213 aa).

5-phospho-alpha-D-ribose 1-diphosphate-binding positions include arginine 77, arginine 102, and 129-137 (DPMLATGGS). Residues isoleucine 198 and 203–205 (GDA) contribute to the uracil site. Residue aspartate 204 coordinates 5-phospho-alpha-D-ribose 1-diphosphate.

This sequence belongs to the UPRTase family. Mg(2+) serves as cofactor.

The catalysed reaction is UMP + diphosphate = 5-phospho-alpha-D-ribose 1-diphosphate + uracil. It participates in pyrimidine metabolism; UMP biosynthesis via salvage pathway; UMP from uracil: step 1/1. Its activity is regulated as follows. Allosterically activated by GTP. Catalyzes the conversion of uracil and 5-phospho-alpha-D-ribose 1-diphosphate (PRPP) to UMP and diphosphate. This chain is Uracil phosphoribosyltransferase, found in Mycobacteroides abscessus (strain ATCC 19977 / DSM 44196 / CCUG 20993 / CIP 104536 / JCM 13569 / NCTC 13031 / TMC 1543 / L948) (Mycobacterium abscessus).